Here is a 147-residue protein sequence, read N- to C-terminus: Hemoglobin subunit epsilon (147 aa).

The region spanning 3–147 is the Globin domain; sequence HWSAEEKQLI…VAHALPRKYH (145 aa). 2 residues coordinate heme b: His64 and His93.

Belongs to the globin family. Heterotetramer of two epsilon chains and two alpha chains. Red blood cells.

Its function is as follows. Beta-type chain found in early embryos. This is Hemoglobin subunit epsilon (HBE) from Cairina moschata (Muscovy duck).